The primary structure comprises 66 residues: Large ribosomal subunit protein bL32 (66 aa).

This sequence belongs to the bacterial ribosomal protein bL32 family.

The sequence is that of Large ribosomal subunit protein bL32 from Acetivibrio thermocellus (strain ATCC 27405 / DSM 1237 / JCM 9322 / NBRC 103400 / NCIMB 10682 / NRRL B-4536 / VPI 7372) (Clostridium thermocellum).